A 513-amino-acid chain; its full sequence is Prostaglandin E2 receptor EP4 subtype (513 aa).

The Extracellular portion of the chain corresponds to 1–44 (MAEVGGTIPRSNRELQRCVLLTTTIMSIPGVNASFSSTPERLNS). Asparagine 32 carries an N-linked (GlcNAc...) asparagine glycan. The helical transmembrane segment at 45 to 68 (PVTIPAVMFIFGVVGNLVAIVVLC) threads the bilayer. At 69–80 (KSRKEQKETTFY) the chain is on the cytoplasmic side. Residues 81–104 (TLVCGLAVTDLLGTLLVSPVTIAT) form a helical membrane-spanning segment. The Extracellular portion of the chain corresponds to 105–121 (YMKGQWPGDQALCDYST). Cysteines 117 and 195 form a disulfide. A helical transmembrane segment spans residues 122 to 140 (FILLFFGLSGLSIICAMSI). Residues 141-160 (ERYLAINHAYFYSHYVDKRL) lie on the Cytoplasmic side of the membrane. A helical transmembrane segment spans residues 161–185 (AGLTLFAIYASNVLFCALPNMGLGR). The Extracellular segment spans residues 186-209 (SERQYPGTWCFIDWTTNVTAYAAF). A helical transmembrane segment spans residues 210-236 (SYMYAGFSSFLILATVLCNVLVCGALL). The Cytoplasmic segment spans residues 237–295 (RMHRQFMRRTSLGTEQHHAAAAAAVASVACRGHAGASPALQRLSDFRRRRSFRRIAGAE). The helical transmembrane segment at 296–323 (IQMVILLIATSLVVLICSIPLVVRVFIN) threads the bilayer. Residues 324–340 (QLYQPNVVKDISRNPDL) lie on the Extracellular side of the membrane. A helical transmembrane segment spans residues 341–360 (QAIRIASVNPILDPWIYILL). Over 361–513 (RKTVLSKAIE…ETLKLSEKCI (153 aa)) the chain is Cytoplasmic. Residues 383–403 (GRDSSAQHCSESRRTSSAMSG) are disordered. The span at 384 to 403 (RDSSAQHCSESRRTSSAMSG) shows a compositional bias: polar residues. Phosphoserine occurs at positions 402, 405, and 407.

It belongs to the G-protein coupled receptor 1 family. In terms of assembly, interacts with FEM1A. Post-translationally, phosphorylation mediates agonist-mediated desensitization by promoting cytoplasmic retention. Abundant expression in ileum, thymus and mastocytoma P-815 cells. Also observed in lung, spleen, heart and uterus.

The protein resides in the cell membrane. Receptor for prostaglandin E2 (PGE2). The activity of this receptor is mediated by G(s) proteins that stimulate adenylate cyclase. Has a relaxing effect on smooth muscle. May play an important role in regulating renal hemodynamics, intestinal epithelial transport, adrenal aldosterone secretion, and uterine function. This is Prostaglandin E2 receptor EP4 subtype (Ptger4) from Mus musculus (Mouse).